We begin with the raw amino-acid sequence, 586 residues long: Putative ABC transporter ATP-binding protein MG187 homolog (586 aa).

An ABC transporter domain is found at 13-464; it reads IEFKNIVVDF…PANEFVATFL (452 aa). 45 to 52 contributes to the ATP binding site; it reads GPSGCGKT.

Belongs to the ABC transporter superfamily.

In Mycoplasma pneumoniae (strain ATCC 29342 / M129 / Subtype 1) (Mycoplasmoides pneumoniae), this protein is Putative ABC transporter ATP-binding protein MG187 homolog.